The primary structure comprises 192 residues: uncharacterized protein (192 aa).

In terms of domain architecture, Nudix hydrolase spans 29–160; the sequence is QRQAAVLVPI…PLDIERKQQR (132 aa). Residues 67 to 89 carry the Nudix box motif; the sequence is GAADKTDRSIIETALREAQEEVA. The Mg(2+) site is built by Glu83 and Glu87.

The protein belongs to the Nudix hydrolase family. PCD1 subfamily. Requires Mn(2+) as cofactor. Mg(2+) serves as cofactor.

Probably mediates the hydrolysis of some nucleoside diphosphate derivatives. This is an uncharacterized protein from Pectobacterium atrosepticum (strain SCRI 1043 / ATCC BAA-672) (Erwinia carotovora subsp. atroseptica).